The following is a 376-amino-acid chain: Cysteine synthase 1 (376 aa).

The N-terminal 16 residues, 1–16, are a transit peptide targeting the mitochondrion; that stretch reads MFRHGVRTFATTSLRR. Lys79 is modified (N6-(pyridoxal phosphate)lysine). Pyridoxal 5'-phosphate contacts are provided by residues Asn109, 215 to 219, and Ser314; that span reads GTGGT.

This sequence belongs to the cysteine synthase/cystathionine beta-synthase family. Pyridoxal 5'-phosphate serves as cofactor.

The protein resides in the mitochondrion. It carries out the reaction O-succinyl-L-serine + hydrogen sulfide = L-cysteine + succinate. It catalyses the reaction O-acetyl-L-serine + hydrogen sulfide = L-cysteine + acetate. Its pathway is amino-acid biosynthesis; L-cysteine biosynthesis; L-cysteine from L-serine: step 2/2. Catalyzes the conversion of O-succinyl-L-serine into cysteine, the last step in the cysteine biosynthesis pathway. Can also use O-acetyl-L-serine. This Neurospora crassa (strain ATCC 24698 / 74-OR23-1A / CBS 708.71 / DSM 1257 / FGSC 987) protein is Cysteine synthase 1 (cys-17).